We begin with the raw amino-acid sequence, 581 residues long: Ras-specific guanine nucleotide-releasing factor RalGPS1 (581 aa).

Residues 1-31 (MYRRNGLPASVSITSRNTQDSSSSESLDGRS) form a disordered region. Residues 49 to 288 (TPEEFASQIT…YSLSLKIEPG (240 aa)) form the Ras-GEF domain. The tract at residues 320–339 (PDTSVVAHLPTPPPARHRKS) is disordered. The PXXP signature appears at 329-332 (PTPP). A PH domain is found at 455–567 (SITIEGPLRR…WHRHLAEACR (113 aa)).

It localises to the cytoplasm. It is found in the cell membrane. Guanine nucleotide exchange factor. May be involved in cytoskeletal organization. In Danio rerio (Zebrafish), this protein is Ras-specific guanine nucleotide-releasing factor RalGPS1 (ralgps1).